A 617-amino-acid chain; its full sequence is Prothrombin (617 aa).

Positions 1-24 (MLHVRGLGLPGCLALAALASLVHS) are cleaved as a signal peptide. Positions 25–43 (QHVFLAPQQALSLLQRVRR) are excised as a propeptide. The 47-residue stretch at 44–90 (ANSGFLEELRKGNLERECVEEQCSYEEAFEALESPQDTDVFWAKYTV) folds into the Gla domain. 4-carboxyglutamate occurs at positions 50, 51, 58, 60, 63, 64, 69, 70, 73, and 76. A disulfide bridge connects residues C61 and C66. 10 disulfide bridges follow: C91/C104, C109/C187, C130/C170, C158/C182, C215/C292, C236/C276, C264/C287, C332/C478, C387/C403, and C532/C546. Kringle domains lie at 109–187 (CAMD…IPVC) and 215–292 (CLLE…LNYC). N-linked (GlcNAc...) asparagine glycosylation is found at N120 and N144. The 255-residue stretch at 360-614 (IVEGWDAEKG…LKRWMQKVID (255 aa)) folds into the Peptidase S1 domain. Catalysis depends on H402, which acts as the Charge relay system. N412 carries N-linked (GlcNAc...) asparagine glycosylation. Catalysis depends on D458, which acts as the Charge relay system. Residues 547 to 569 (AGFKVNDTKRGDACEGDSGGPFV) form a high affinity receptor-binding region which is also known as the TP508 peptide region. N552 is a glycosylation site (N-linked (GlcNAc...) asparagine). C560 and C590 are oxidised to a cystine. S564 (charge relay system) is an active-site residue.

Belongs to the peptidase S1 family. Heterodimer (named alpha-thrombin) of a light and a heavy chain; disulfide-linked. Forms a heterodimer with SERPINA5. In plasma, interacts (via N-terminus) with alpha-1-microglobulin; this interaction does not prevent the activation of prothrombin to thrombin. Post-translationally, the gamma-carboxyglutamyl residues, which bind calcium ions, result from the carboxylation of glutamyl residues by a microsomal enzyme, the vitamin K-dependent carboxylase. The modified residues are necessary for the calcium-dependent interaction with a negatively charged phospholipid surface, which is essential for the conversion of prothrombin to thrombin. In the penultimate step of the coagulation cascade, prothrombin is converted to thrombin by the prothrombinase complex composed of factor Xa (F10), cofactor Va (F5), and phospholipids. This activation requires factor Xa-catalyzed sequential cleavage at 2 sites, Arg-310 and Arg-359, along 2 possible pathways. In the first pathway, the first cleavage occurs at Arg-310, leading to the formation of the inactive intermediate prethrombin-2. This pathway preferentially occurs on platelets and in the absence of cofactor Va. In the second pathway, the first cleavage occurs at Arg-359, which separates protease domain into 2 chains that remain connected through a disulfide bond and generates the active intermediate meizothrombin. The presence of cofactor Va directs activation along the meizothrombin pathway and greatly accelerates the rate of cleavage at Arg-359, but has a smaller effect on the cleavage of meizothrombin at Arg-310. Meizothrombin accumulates as an intermediate when prothrombinase is assembled on the membrane of red blood cells.

It catalyses the reaction Selective cleavage of Arg-|-Gly bonds in fibrinogen to form fibrin and release fibrinopeptides A and B.. Its activity is regulated as follows. Activity is promoted in the presence of negatively charged surfaces, such as polyphosphate and dextran sulfate. Inhibited by SERPINA5. Thrombin, which cleaves bonds after Arg and Lys, converts fibrinogen to fibrin and activates factors V, VII, VIII, XIII, and, in complex with thrombomodulin, protein C. Functions in blood homeostasis, inflammation and wound healing. Activates coagulation factor XI (F11); activation is promoted by the contact with negatively charged surfaces. Triggers the production of pro-inflammatory cytokines, such as MCP-1/CCL2 and IL8/CXCL8, in endothelial cells. The protein is Prothrombin (F2) of Rattus norvegicus (Rat).